A 264-amino-acid chain; its full sequence is Acyl-[acyl-carrier-protein]--UDP-N-acetylglucosamine O-acyltransferase (264 aa).

This sequence belongs to the transferase hexapeptide repeat family. LpxA subfamily. In terms of assembly, homotrimer.

The protein localises to the cytoplasm. The catalysed reaction is a (3R)-hydroxyacyl-[ACP] + UDP-N-acetyl-alpha-D-glucosamine = a UDP-3-O-[(3R)-3-hydroxyacyl]-N-acetyl-alpha-D-glucosamine + holo-[ACP]. It functions in the pathway glycolipid biosynthesis; lipid IV(A) biosynthesis; lipid IV(A) from (3R)-3-hydroxytetradecanoyl-[acyl-carrier-protein] and UDP-N-acetyl-alpha-D-glucosamine: step 1/6. In terms of biological role, involved in the biosynthesis of lipid A, a phosphorylated glycolipid that anchors the lipopolysaccharide to the outer membrane of the cell. This is Acyl-[acyl-carrier-protein]--UDP-N-acetylglucosamine O-acyltransferase from Rickettsia africae (strain ESF-5).